The following is a 489-amino-acid chain: Kynureninase 2 (489 aa).

The span at 1-12 (MDASAAISQLRQ) shows a compositional bias: polar residues. The tract at residues 1–25 (MDASAAISQLRQGQKPEWPQNANTS) is disordered. Pyridoxal 5'-phosphate is bound by residues leucine 149, threonine 150, 177–180 (FPSD), aspartate 261, histidine 264, and tyrosine 286. The residue at position 287 (lysine 287) is an N6-(pyridoxal phosphate)lysine. Residues tryptophan 317 and asparagine 345 each coordinate pyridoxal 5'-phosphate.

The protein belongs to the kynureninase family. In terms of assembly, homodimer. The cofactor is pyridoxal 5'-phosphate.

The protein localises to the cytoplasm. The enzyme catalyses L-kynurenine + H2O = anthranilate + L-alanine + H(+). It catalyses the reaction 3-hydroxy-L-kynurenine + H2O = 3-hydroxyanthranilate + L-alanine + H(+). Its pathway is amino-acid degradation; L-kynurenine degradation; L-alanine and anthranilate from L-kynurenine: step 1/1. It participates in cofactor biosynthesis; NAD(+) biosynthesis; quinolinate from L-kynurenine: step 2/3. In terms of biological role, catalyzes the cleavage of L-kynurenine (L-Kyn) and L-3-hydroxykynurenine (L-3OHKyn) into anthranilic acid (AA) and 3-hydroxyanthranilic acid (3-OHAA), respectively. In Phaeosphaeria nodorum (strain SN15 / ATCC MYA-4574 / FGSC 10173) (Glume blotch fungus), this protein is Kynureninase 2.